A 191-amino-acid chain; its full sequence is Pyridoxal 5'-phosphate synthase subunit PdxT (191 aa).

48–50 (GES) lines the L-glutamine pocket. The active-site Nucleophile is the cysteine 81. Residues arginine 109 and 136–137 (IR) each bind L-glutamine. Catalysis depends on charge relay system residues histidine 172 and glutamate 174.

The protein belongs to the glutaminase PdxT/SNO family. As to quaternary structure, in the presence of PdxS, forms a dodecamer of heterodimers. Only shows activity in the heterodimer.

It catalyses the reaction aldehydo-D-ribose 5-phosphate + D-glyceraldehyde 3-phosphate + L-glutamine = pyridoxal 5'-phosphate + L-glutamate + phosphate + 3 H2O + H(+). It carries out the reaction L-glutamine + H2O = L-glutamate + NH4(+). Its pathway is cofactor biosynthesis; pyridoxal 5'-phosphate biosynthesis. Functionally, catalyzes the hydrolysis of glutamine to glutamate and ammonia as part of the biosynthesis of pyridoxal 5'-phosphate. The resulting ammonia molecule is channeled to the active site of PdxS. The sequence is that of Pyridoxal 5'-phosphate synthase subunit PdxT from Thermus thermophilus (strain ATCC BAA-163 / DSM 7039 / HB27).